The sequence spans 491 residues: Blue-light-activated histidine kinase (491 aa).

The 74-residue stretch at 19–92 folds into the PAS 1 domain; sequence EANPFTAAVE…EIIHSALEAE (74 aa). C69 carries the post-translational modification S-4a-FMN cysteine. The PAC domain maps to 93–147; it reads QSVEIDILNYKKSGEPFWNRLHISPVKTENGELHHFVSSQLDVTLELGKLVELEK. Residues 159–230 form the PAS 2 domain; the sequence is SSDQLQYIVE…QRSQESFATG (72 aa). The tract at residues 286-368 is HWE histidine kinase domain; the sequence is EISHRFKNSM…GHRIRTSGPE (83 aa). Residue H289 is modified to Phosphohistidine; by autocatalysis.

FMN binds covalently to cysteine after exposure to blue light and this bond is spontaneously broken in the dark.

The enzyme catalyses ATP + protein L-histidine = ADP + protein N-phospho-L-histidine.. Its function is as follows. Photosensitive kinase that is involved in increased bacterial virulence upon exposure to light. This chain is Blue-light-activated histidine kinase, found in Brucella anthropi (strain ATCC 49188 / DSM 6882 / CCUG 24695 / JCM 21032 / LMG 3331 / NBRC 15819 / NCTC 12168 / Alc 37) (Ochrobactrum anthropi).